The following is a 142-amino-acid chain: Fluoride-specific ion channel FluC 1 (142 aa).

The next 4 membrane-spanning stretches (helical) occupy residues 23–43 (VNIALVLLGGMLGAPVRYLID), 54–74 (LPLGTLTVNIVGSAVLGGLIG), 79–99 (GWLLTAAGTGFCGALTTFSTF), and 116–136 (LGNVVISVAASVGAVYAAVSL). 2 residues coordinate Na(+): glycine 91 and threonine 94.

It belongs to the fluoride channel Fluc/FEX (TC 1.A.43) family.

The protein localises to the cell membrane. The catalysed reaction is fluoride(in) = fluoride(out). Its activity is regulated as follows. Na(+) is not transported, but it plays an essential structural role and its presence is essential for fluoride channel function. Functionally, fluoride-specific ion channel. Important for reducing fluoride concentration in the cell, thus reducing its toxicity. This Nocardia farcinica (strain IFM 10152) protein is Fluoride-specific ion channel FluC 1.